The primary structure comprises 562 residues: Calmodulin-binding protein 60 F (562 aa).

The interval 1–22 (MENSMNNRGHGHNQEHADNLPE) is disordered. The tract at residues 5–84 (MNNRGHGHNQ…STSRSTEPNK (80 aa)) is calmodulin-binding. Over residues 12-22 (HNQEHADNLPE) the composition is skewed to basic and acidic residues. The interval 154–273 (EDDKDWTREH…ALHKKLLKSN (120 aa)) is DNA-binding.

It belongs to the plant ACBP60 protein family. In terms of assembly, interacts with calmodulin (CaM).

It localises to the nucleus. Its function is as follows. Transcription activator that binds DNA in a sequence-specific manner, likely 5'-GAAATTTTGG-3', to promote the expression of target genes. The sequence is that of Calmodulin-binding protein 60 F from Arabidopsis thaliana (Mouse-ear cress).